Consider the following 398-residue polypeptide: Succinate--CoA ligase [ADP-forming] subunit beta (398 aa).

Residues 9-254 (KALLGEFGVP…ETEEDAKEIE (246 aa)) enclose the ATP-grasp domain. ATP contacts are provided by residues K46, 53–55 (GRG), E109, S112, and E117. Mg(2+) is bound by residues N209 and D223. Residues N274 and 331–333 (GIM) contribute to the substrate site.

Belongs to the succinate/malate CoA ligase beta subunit family. Heterotetramer of two alpha and two beta subunits. Mg(2+) serves as cofactor.

The enzyme catalyses succinate + ATP + CoA = succinyl-CoA + ADP + phosphate. The catalysed reaction is GTP + succinate + CoA = succinyl-CoA + GDP + phosphate. It participates in carbohydrate metabolism; tricarboxylic acid cycle; succinate from succinyl-CoA (ligase route): step 1/1. In terms of biological role, succinyl-CoA synthetase functions in the citric acid cycle (TCA), coupling the hydrolysis of succinyl-CoA to the synthesis of either ATP or GTP and thus represents the only step of substrate-level phosphorylation in the TCA. The beta subunit provides nucleotide specificity of the enzyme and binds the substrate succinate, while the binding sites for coenzyme A and phosphate are found in the alpha subunit. This is Succinate--CoA ligase [ADP-forming] subunit beta from Bradyrhizobium diazoefficiens (strain JCM 10833 / BCRC 13528 / IAM 13628 / NBRC 14792 / USDA 110).